We begin with the raw amino-acid sequence, 103 residues long: Potassium voltage-gated channel subfamily E member 3 (103 aa).

N5, N22, and N41 each carry an N-linked (GlcNAc...) asparagine glycan. The interval 32–53 is disordered; the sequence is RPGPGLGPDNQTEERRASLPGR. The segment covering 43–53 has biased composition (basic and acidic residues); sequence TEERRASLPGR. Residues 57 to 77 form a helical membrane-spanning segment; it reads SYMYILFVMFLFAVTVGSLIL. An interaction with KCNQ1 region spans residues 68–79; that stretch reads FAVTVGSLILGY. The Cytoplasmic portion of the chain corresponds to 78–103; the sequence is GYTRSRKVDKRSDPYHVYIKNRVSMI.

It belongs to the potassium channel KCNE family. Interacts with KCNB1. Interacts with KCNC2. Associates with KCNC4/Kv3.4. Interacts with KCNQ1; associates with a KCNQ1:KCNE3 stoichiometry of 4:4; produces a current with nearly instantaneous activation with a linear current-voltage relationship and alters membrane raft localization; affects KCNQ1 structure and gating properties. Expressed in hippocampal neurons (at protein level). Widely expressed with highest levels in kidney and moderate levels in small intestine.

The protein resides in the cell membrane. The protein localises to the cytoplasm. It is found in the perikaryon. It localises to the cell projection. Its subcellular location is the dendrite. The protein resides in the membrane raft. Ancillary protein that functions as a regulatory subunit of the voltage-gated potassium (Kv) channel complex composed of pore-forming and potassium-conducting alpha subunits and of regulatory beta subunits. KCNE3 beta subunit modulates the gating kinetics and enhances stability of the channel complex. Alters the gating of the delayed rectifier Kv channel containing KCNB1 alpha subunit. Associates with KCNC4/Kv3.4 alpha subunit to form the subthreshold Kv channel in skeletal muscle and to establish the resting membrane potential (RMP) in muscle cells. Association with KCNQ1/KCLQT1 alpha subunit may form the intestinal cAMP-stimulated potassium channel involved in chloride secretion that produces a current with nearly instantaneous activation with a linear current-voltage relationship. The sequence is that of Potassium voltage-gated channel subfamily E member 3 from Homo sapiens (Human).